We begin with the raw amino-acid sequence, 599 residues long: Sodium-dependent phosphate transport protein 2C (599 aa).

The Cytoplasmic segment spans residues 1 to 76 (MPSSLPGSQV…RRVAGSVLKA (76 aa)). Position 4 is a phosphoserine (Ser4). The chain crosses the membrane as a helical span at residues 77 to 97 (CGLLGSLYFFICSLDVLSSAF). Over 98 to 111 (QLLGSKVAGDIFKD) the chain is Extracellular. The chain crosses the membrane as a helical span at residues 112–132 (NVVLSNPVAGLVIGVLVTALV). The Cytoplasmic segment spans residues 133–188 (QSSSTSSSIVVSMVAAKLLTVRVSVPIIMGVNVGTSITSTLVSMAQSGDRDEFQRA). The chain crosses the membrane as a helical span at residues 189-209 (FSGSAVHGIFNWLTVLVLLPL). At 210 to 322 (ESATALLERL…FAGTELTDLA (113 aa)) the chain is on the extracellular side. 4 N-linked (GlcNAc...) asparagine glycosylation sites follow: Asn265, Asn268, Asn286, and Asn299. A disulfide bridge links Cys276 with Cys309. The helical transmembrane segment at 323–343 (VGCILLAGSLLVLCGCLVLIV) threads the bilayer. Over 344–367 (KLLNSVLRGRVAQVVRTVINADFP) the chain is Cytoplasmic. The chain crosses the membrane as a helical span at residues 368–388 (FPLGWLGGYLAVLAGAGLTFA). The Extracellular portion of the chain corresponds to 389 to 445 (LQSSSVFTAAVVPLMGVGVISLDRAYPLLLGSNIGTTTTALLAALASPADRMLSALQ). A helical membrane pass occupies residues 446-466 (VALIHFFFNLAGILLWYLVPA). At 467 to 485 (LRLPIPLARHFGVVTARYR) the chain is on the cytoplasmic side. The chain crosses the membrane as a helical span at residues 486 to 506 (WVAGVYLLLGFLLLPLAAFGL). Residues 507-510 (SLAG) are Extracellular-facing. Residues 511 to 531 (GMELAAVGGPLVGLVLLVILV) traverse the membrane as a helical segment. The Cytoplasmic segment spans residues 532–599 (TVLQRRRPAW…NPEILASQQL (68 aa)).

It belongs to the SLC34A transporter family. Expressed only in the kidney.

The protein resides in the apical cell membrane. It catalyses the reaction 2 Na(+)(out) + phosphate(out) = 2 Na(+)(in) + phosphate(in). Functionally, involved in actively transporting phosphate into cells via Na(+) cotransport in the renal brush border membrane. The cotransport has a Na(+):Pi stoichiometry of 2:1 and is electroneutral. The protein is Sodium-dependent phosphate transport protein 2C (SLC34A3) of Homo sapiens (Human).